The sequence spans 284 residues: 4-diphosphocytidyl-2-C-methyl-D-erythritol kinase (284 aa).

Residue lysine 14 is part of the active site. 98–108 (PMGGGLGGGSS) contacts ATP. Residue aspartate 140 is part of the active site.

Belongs to the GHMP kinase family. IspE subfamily.

It catalyses the reaction 4-CDP-2-C-methyl-D-erythritol + ATP = 4-CDP-2-C-methyl-D-erythritol 2-phosphate + ADP + H(+). The protein operates within isoprenoid biosynthesis; isopentenyl diphosphate biosynthesis via DXP pathway; isopentenyl diphosphate from 1-deoxy-D-xylulose 5-phosphate: step 3/6. In terms of biological role, catalyzes the phosphorylation of the position 2 hydroxy group of 4-diphosphocytidyl-2C-methyl-D-erythritol. The protein is 4-diphosphocytidyl-2-C-methyl-D-erythritol kinase of Shewanella halifaxensis (strain HAW-EB4).